Reading from the N-terminus, the 510-residue chain is MIWHVQNENFILDSTRIFMKAFHLLLFHGSFIFPECILIFGLILLLMIDSTSDQKDRPWFYFISSTSLVMSITALLFRWKEEPIISFSGNFQTNNFNEIFQFLILLCSTLCIPLSVEYIECTEMAITEFLLFVLTATLGGMFLCGANDLITIFVAPECFSLCSYLLSGYTKRDVRSNEATTKYLLMGGASSSILVHGFSWLYGLSGGEIELQEIVNGLINTQMYNSPGISIALISITVGIGFKLSPAPFHQWTPDVYEGSPTPVVAFLSVTSKVAASASATRIFDIPFYFSSNEWHLLLEILAILSMILGNLIAITQTSMKRMLAYSSIGQIGYVIIGIIVGDSNDGYASMITYMLFYISMNLGTFARIVSFGLRTGTDNIRDYAGLYTKDPFLALSLALCLLSLGGLPPLAGFFGKLHLFWCGWQAGLYFLVSIGLLTSVVSIYYYLKIIKLLMTGRNQEITPHVRNYRRSPLRSNNSIEWSMTVCVIASTIPGISMNPILAIAQDTLF.

The next 12 membrane-spanning stretches (helical) occupy residues 24 to 44, 59 to 79, 99 to 119, 124 to 144, 149 to 169, 184 to 204, 229 to 249, 295 to 315, 323 to 343, 347 to 367, 395 to 415, and 418 to 438; these read LLLF…GLIL, WFYF…LFRW, IFQF…VEYI, MAIT…MFLC, LITI…LSGY, LLMG…LYGL, ISIA…PAPF, WHLL…LIAI, MLAY…IVGD, GYAS…GTFA, ALSL…AGFF, and LHLF…IGLL.

Belongs to the complex I subunit 2 family. In terms of assembly, NDH is composed of at least 16 different subunits, 5 of which are encoded in the nucleus.

It localises to the plastid. It is found in the chloroplast thylakoid membrane. The catalysed reaction is a plastoquinone + NADH + (n+1) H(+)(in) = a plastoquinol + NAD(+) + n H(+)(out). The enzyme catalyses a plastoquinone + NADPH + (n+1) H(+)(in) = a plastoquinol + NADP(+) + n H(+)(out). NDH shuttles electrons from NAD(P)H:plastoquinone, via FMN and iron-sulfur (Fe-S) centers, to quinones in the photosynthetic chain and possibly in a chloroplast respiratory chain. The immediate electron acceptor for the enzyme in this species is believed to be plastoquinone. Couples the redox reaction to proton translocation, and thus conserves the redox energy in a proton gradient. This is NAD(P)H-quinone oxidoreductase subunit 2, chloroplastic from Muilla maritima (Sea muilla).